We begin with the raw amino-acid sequence, 262 residues long: Glutamate racemase (262 aa).

Substrate is bound by residues 5-6 (DS) and 37-38 (YG). Cys-69 acts as the Proton donor/acceptor in catalysis. 70–71 (NT) contacts substrate. Cys-181 functions as the Proton donor/acceptor in the catalytic mechanism. Residue 182–183 (TH) participates in substrate binding.

It belongs to the aspartate/glutamate racemases family.

The enzyme catalyses L-glutamate = D-glutamate. Its pathway is cell wall biogenesis; peptidoglycan biosynthesis. Provides the (R)-glutamate required for cell wall biosynthesis. This Buchnera aphidicola subsp. Acyrthosiphon pisum (strain Tuc7) protein is Glutamate racemase.